Here is a 400-residue protein sequence, read N- to C-terminus: uncharacterized protein (400 aa).

This is an uncharacterized protein from Saccharomyces cerevisiae (strain ATCC 204508 / S288c) (Baker's yeast).